Consider the following 172-residue polypeptide: 3-hydroxydecanoyl-[acyl-carrier-protein] dehydratase (172 aa).

Residue His-71 is part of the active site.

It belongs to the thioester dehydratase family. FabA subfamily. As to quaternary structure, homodimer.

Its subcellular location is the cytoplasm. It carries out the reaction a (3R)-hydroxyacyl-[ACP] = a (2E)-enoyl-[ACP] + H2O. The enzyme catalyses (3R)-hydroxydecanoyl-[ACP] = (2E)-decenoyl-[ACP] + H2O. The catalysed reaction is (2E)-decenoyl-[ACP] = (3Z)-decenoyl-[ACP]. Its pathway is lipid metabolism; fatty acid biosynthesis. In terms of biological role, necessary for the introduction of cis unsaturation into fatty acids. Catalyzes the dehydration of (3R)-3-hydroxydecanoyl-ACP to E-(2)-decenoyl-ACP and then its isomerization to Z-(3)-decenoyl-ACP. Can catalyze the dehydratase reaction for beta-hydroxyacyl-ACPs with saturated chain lengths up to 16:0, being most active on intermediate chain length. This Photorhabdus laumondii subsp. laumondii (strain DSM 15139 / CIP 105565 / TT01) (Photorhabdus luminescens subsp. laumondii) protein is 3-hydroxydecanoyl-[acyl-carrier-protein] dehydratase.